A 278-amino-acid chain; its full sequence is Neuronal membrane glycoprotein M6-a (278 aa).

Methionine 1 is modified (N-acetylmethionine). Topologically, residues 1–22 (MEENMEEGQTQKGCFECCIKCL) are cytoplasmic. A helical membrane pass occupies residues 23-43 (GGIPYASLIATILLYAGVALF). The Extracellular portion of the chain corresponds to 44-84 (CGCGHEALSGTVNILQTYFEMARTAGDTLDVFTMIDIFKYV). A helical membrane pass occupies residues 85–105 (IYGIAAAFFVYGILLMVEGFF). The Cytoplasmic portion of the chain corresponds to 106–127 (TTGAIKDLYGDFKITTCGRCVS). The chain crosses the membrane as a helical span at residues 128 to 148 (AWFIMLTYLFMLAWLGVTAFT). The Extracellular portion of the chain corresponds to 149–213 (SLPVYMYFNV…STELNMTFHL (65 aa)). Residue asparagine 164 is glycosylated (N-linked (GlcNAc...) asparagine). Cysteine 174 and cysteine 192 are disulfide-bonded. N-linked (GlcNAc...) asparagine glycosylation is present at asparagine 208. The chain crosses the membrane as a helical span at residues 214–234 (FIVALAGAGAAVIAMVHYLMV). Over 235 to 278 (LSANWAYVKDACRMQKYEDIKSKEEQELHDIHSTRSKERLNAYT) the chain is Cytoplasmic. At serine 256 the chain carries Phosphoserine. Threonine 278 carries the post-translational modification Phosphothreonine.

This sequence belongs to the myelin proteolipid protein family. As to quaternary structure, interacts with OPRM1. Interacts with palmitoyltransferase ZDHHC17/HIP14; the interaction leads to palmitoylation of GPM6A. N-glycosylated. In terms of processing, palmitoylated by ZDHHC17/HIP14. In terms of tissue distribution, expressed in hippocampus (at protein level). Isoform 1 is the predominant isoform expressed in brain, specifically in hippocampus. Isoform 2 is expressed at low levels in brain and kidney.

The protein resides in the cell membrane. Its subcellular location is the cell projection. It is found in the axon. It localises to the growth cone. The protein localises to the dendritic spine. The protein resides in the filopodium. Its subcellular location is the neuron projection. Its function is as follows. Involved in neuronal differentiation, including differentiation and migration of neuronal stem cells. Plays a role in neuronal plasticity and is involved in neurite and filopodia outgrowth, filopodia motility and probably synapse formation. Gpm6a-induced filopodia formation involves mitogen-activated protein kinase (MAPK) and Src signaling pathways. May be involved in neuronal NGF-dependent Ca(2+) influx. May be involved in regulation of endocytosis and intracellular trafficking of G-protein-coupled receptors (GPCRs); enhances internalization and recycling of mu-type opioid receptor. The protein is Neuronal membrane glycoprotein M6-a (Gpm6a) of Rattus norvegicus (Rat).